We begin with the raw amino-acid sequence, 265 residues long: Protein HesA, vegetative (265 aa).

It belongs to the HesA/MoeB/ThiF family.

The polypeptide is Protein HesA, vegetative (hesA2) (Trichormus variabilis (strain ATCC 29413 / PCC 7937) (Anabaena variabilis)).